The primary structure comprises 346 residues: Phenylalanine--tRNA ligase alpha subunit (346 aa).

Glutamate 258 contacts Mg(2+).

Belongs to the class-II aminoacyl-tRNA synthetase family. Phe-tRNA synthetase alpha subunit type 1 subfamily. In terms of assembly, tetramer of two alpha and two beta subunits. The cofactor is Mg(2+).

It localises to the cytoplasm. The enzyme catalyses tRNA(Phe) + L-phenylalanine + ATP = L-phenylalanyl-tRNA(Phe) + AMP + diphosphate + H(+). This is Phenylalanine--tRNA ligase alpha subunit from Protochlamydia amoebophila (strain UWE25).